A 132-amino-acid chain; its full sequence is Small ribosomal subunit protein uS8 (132 aa).

The protein belongs to the universal ribosomal protein uS8 family. In terms of assembly, part of the 30S ribosomal subunit. Contacts proteins S5 and S12.

Its function is as follows. One of the primary rRNA binding proteins, it binds directly to 16S rRNA central domain where it helps coordinate assembly of the platform of the 30S subunit. The sequence is that of Small ribosomal subunit protein uS8 from Leuconostoc mesenteroides subsp. mesenteroides (strain ATCC 8293 / DSM 20343 / BCRC 11652 / CCM 1803 / JCM 6124 / NCDO 523 / NBRC 100496 / NCIMB 8023 / NCTC 12954 / NRRL B-1118 / 37Y).